The primary structure comprises 181 residues: Large ribosomal subunit protein uL5 (181 aa).

It belongs to the universal ribosomal protein uL5 family. In terms of assembly, part of the 50S ribosomal subunit; part of the 5S rRNA/L5/L18/L25 subcomplex. Contacts the 5S rRNA and the P site tRNA. Forms a bridge to the 30S subunit in the 70S ribosome.

This is one of the proteins that bind and probably mediate the attachment of the 5S RNA into the large ribosomal subunit, where it forms part of the central protuberance. In the 70S ribosome it contacts protein S13 of the 30S subunit (bridge B1b), connecting the 2 subunits; this bridge is implicated in subunit movement. Contacts the P site tRNA; the 5S rRNA and some of its associated proteins might help stabilize positioning of ribosome-bound tRNAs. This is Large ribosomal subunit protein uL5 from Rickettsia canadensis (strain McKiel).